We begin with the raw amino-acid sequence, 428 residues long: Immunoglobulin superfamily containing leucine-rich repeat protein (428 aa).

The first 18 residues, 1 to 18 (MQELHLLWWALLLGLAQA), serve as a signal peptide directing secretion. Residues 19–50 (CPEPCDCGEKYGFQIADCAYRDLEAVPPGFPA) form the LRRNT domain. A glycan (N-linked (GlcNAc...) asparagine) is linked at Asn-51. 5 LRR repeats span residues 51 to 72 (NVTA…AFRE), 75 to 96 (LLQS…ALAS), 99 to 122 (HLKS…HNLS), 123 to 144 (ALQL…AFRS), and 147 to 168 (ALRS…TFTP). In terms of domain architecture, LRRCT spans 180 to 231 (NPFDCTCGIVWLKTWALATAVSIPEQDNIACTSPHVLKGTPLSRLPPLPCSA). The Ig-like domain maps to 232-343 (PSVQLSYQPS…GSAESSVDVA (112 aa)). A disulfide bridge links Cys-257 with Cys-327. N-linked (GlcNAc...) asparagine glycosylation is present at Asn-309.

The protein localises to the secreted. The protein is Immunoglobulin superfamily containing leucine-rich repeat protein (ISLR) of Pongo abelii (Sumatran orangutan).